A 508-amino-acid chain; its full sequence is Amphoterin-induced protein 3 (508 aa).

An N-terminal signal peptide occupies residues 1-19 (MAWLVLLGLLLCMLGAGSG). Topologically, residues 20–383 (TSDLEGVLPP…PRPEPEAFNT (364 aa)) are extracellular. Positions 25–61 (GVLPPDPHNCPNKCVCAADVLSCAGRGLQDLPAALPA) constitute an LRRNT domain. Intrachain disulfides connect Cys-34/Cys-40 and Cys-38/Cys-47. LRR repeat units follow at residues 62–83 (TAAE…WLAP), 86–107 (RLRA…VFTN), 110–131 (GLRI…DLDG), 134–155 (ELEK…AFQG), 158–178 (MLSH…NHLH), and 184–207 (RLRT…AALP). N-linked (GlcNAc...) asparagine glycosylation is present at Asn-107. In terms of domain architecture, LRRCT spans 219–275 (NPLPCDCSLYHLLRRWHQRGLSALHDFEREYTCLAFKVAESRVRFFEHSRVFKNCSV). 3 disulfides stabilise this stretch: Cys-223–Cys-251, Cys-225–Cys-273, and Cys-300–Cys-352. 4 N-linked (GlcNAc...) asparagine glycosylation sites follow: Asn-272, Asn-301, Asn-362, and Asn-368. The Ig-like C2-type domain maps to 279–370 (PGLELPEEEL…HNQTLEYNVS (92 aa)). Residues 384 to 404 (GFTTLLGCIVGLVLVLLYLFA) traverse the membrane as a helical segment. Residues 405–508 (PPCRGCCRCC…STGSEGLMMS (104 aa)) lie on the Cytoplasmic side of the membrane.

Belongs to the immunoglobulin superfamily. AMIGO family. Binds AMIGO1 or AMIGO2.

The protein localises to the membrane. May mediate heterophilic cell-cell interaction. May contribute to signal transduction through its intracellular domain. The chain is Amphoterin-induced protein 3 from Rattus norvegicus (Rat).